Consider the following 250-residue polypeptide: Eukaryotic translation initiation factor 3 subunit K (250 aa).

The 184-residue stretch at 46-229 folds into the PCI domain; it reads FDCYANLALL…KENEARSEVK (184 aa).

It belongs to the eIF-3 subunit K family. Component of the eukaryotic translation initiation factor 3 (eIF-3) complex.

It is found in the cytoplasm. Functionally, component of the eukaryotic translation initiation factor 3 (eIF-3) complex, which is involved in protein synthesis of a specialized repertoire of mRNAs and, together with other initiation factors, stimulates binding of mRNA and methionyl-tRNAi to the 40S ribosome. The eIF-3 complex specifically targets and initiates translation of a subset of mRNAs involved in cell proliferation. This chain is Eukaryotic translation initiation factor 3 subunit K, found in Emericella nidulans (strain FGSC A4 / ATCC 38163 / CBS 112.46 / NRRL 194 / M139) (Aspergillus nidulans).